Consider the following 143-residue polypeptide: Large ribosomal subunit protein uL11 (143 aa).

The protein belongs to the universal ribosomal protein uL11 family. Part of the ribosomal stalk of the 50S ribosomal subunit. Interacts with L10 and the large rRNA to form the base of the stalk. L10 forms an elongated spine to which L12 dimers bind in a sequential fashion forming a multimeric L10(L12)X complex. In terms of processing, one or more lysine residues are methylated.

Functionally, forms part of the ribosomal stalk which helps the ribosome interact with GTP-bound translation factors. In Alkalilimnicola ehrlichii (strain ATCC BAA-1101 / DSM 17681 / MLHE-1), this protein is Large ribosomal subunit protein uL11.